Here is a 316-residue protein sequence, read N- to C-terminus: Ribosomal protein L11 methyltransferase (316 aa).

S-adenosyl-L-methionine contacts are provided by threonine 157, glycine 178, aspartate 200, and asparagine 243.

It belongs to the methyltransferase superfamily. PrmA family.

The protein localises to the cytoplasm. The catalysed reaction is L-lysyl-[protein] + 3 S-adenosyl-L-methionine = N(6),N(6),N(6)-trimethyl-L-lysyl-[protein] + 3 S-adenosyl-L-homocysteine + 3 H(+). In terms of biological role, methylates ribosomal protein L11. The polypeptide is Ribosomal protein L11 methyltransferase (Streptococcus pneumoniae (strain JJA)).